A 535-amino-acid polypeptide reads, in one-letter code: Dual specificity calcium/calmodulin-dependent 3',5'-cyclic nucleotide phosphodiesterase 1B (535 aa).

The interval 1-21 is disordered; sequence MELSPRSPPEMLESDCPSPLE. Phosphoserine occurs at positions 7 and 14. Calmodulin-binding stretches follow at residues 26–46 and 117–140; these read PSKK…KQLE and EKPK…MFRR. In terms of domain architecture, PDEase spans 145–502; that stretch reads VGPTYSTAVH…QKWKERAASG (358 aa). H222 (proton donor) is an active-site residue. Zn(2+) is bound by residues H226, H262, D263, and D369. Mg(2+) is bound at residue D263. 2 disordered regions span residues 445 to 474 and 495 to 535; these read PLAD…GDPN and WKER…GNLD. The span at 454–463 shows a compositional bias: polar residues; that stretch reads KSQPSFQWRQ. S465 and S513 each carry phosphoserine.

This sequence belongs to the cyclic nucleotide phosphodiesterase family. PDE1 subfamily. Homodimer. Zn(2+) is required as a cofactor. Requires Mg(2+) as cofactor.

The protein localises to the cytoplasm. It localises to the cytosol. The catalysed reaction is a nucleoside 3',5'-cyclic phosphate + H2O = a nucleoside 5'-phosphate + H(+). It carries out the reaction 3',5'-cyclic GMP + H2O = GMP + H(+). It catalyses the reaction 3',5'-cyclic AMP + H2O = AMP + H(+). Type I PDE are activated by the binding of calmodulin in the presence of Ca(2+). In terms of biological role, cyclic nucleotide phosphodiesterase with a dual specificity for the second messengers cAMP and cGMP, which are key regulators of many important physiological processes. Has a preference for cGMP as a substrate. The polypeptide is Dual specificity calcium/calmodulin-dependent 3',5'-cyclic nucleotide phosphodiesterase 1B (Cricetulus griseus (Chinese hamster)).